Here is a 593-residue protein sequence, read N- to C-terminus: Kelch-like protein 2 (593 aa).

Residues 1–29 (METPPLPPACTKQGHQKPLDSKDENPEKH) form a disordered region. A compositionally biased stretch (basic and acidic residues) spans 17-29 (KPLDSKDENPEKH). Residues 56–123 (CDVTIVAEDM…VYTAEIQVTE (68 aa)) form the BTB domain. 6 Kelch repeats span residues 308–353 (LMVV…YMAG), 354–400 (LVFA…VLNG), 402–447 (LYAV…VVGG), 449–496 (LYAV…VLNN), 497–543 (LLYA…AVNG), and 545–591 (LYVV…VIDK).

In terms of assembly, component of the BCR(KLHL2) E3 ubiquitin ligase complex, at least composed of CUL3 and KLHL2 and RBX1. Binds actin. Interacts with KLHL12. Interacts (via N-terminus) with FYN (via SH3 domain).

The protein resides in the cytoplasm. Its subcellular location is the cytoskeleton. The protein localises to the cell projection. It is found in the ruffle. It localises to the lamellipodium. The protein resides in the cytosol. It participates in protein modification; protein ubiquitination. In terms of biological role, substrate-specific adapter of a BCR (BTB-CUL3-RBX1) E3 ubiquitin ligase complex that mediates the ubiquitination of target proteins, such as NPTXR, WNK1, WNK3 and WNK4, leading most often to their proteasomal degradation. The BCR(KLHL2) complex catalyzes ubiquitination and degradation of NPTXR. Responsible for degradative ubiquitination of the WNK kinases WNK1, WNK3 and WNK4. Plays a role in the reorganization of the actin cytoskeleton. Promotes growth of cell projections in oligodendrocyte precursors. The sequence is that of Kelch-like protein 2 from Mus musculus (Mouse).